A 931-amino-acid polypeptide reads, in one-letter code: Probable zinc protease PqqL (931 aa).

Residue H80 coordinates Zn(2+). Residue E83 is the Proton acceptor of the active site. The Zn(2+) site is built by H84 and E160.

Belongs to the peptidase M16 family. Requires Zn(2+) as cofactor.

This chain is Probable zinc protease PqqL (pqqL), found in Escherichia coli (strain K12).